Consider the following 88-residue polypeptide: L-amino-acid oxidase (88 aa).

Residues Glu74 and 81 to 86 (GWIDST) contribute to the FAD site. 81–82 (GW) is a binding site for substrate.

The protein belongs to the flavin monoamine oxidase family. FIG1 subfamily. In terms of assembly, homodimer; non-covalently linked. It depends on FAD as a cofactor. Post-translationally, N-glycosylated. In terms of tissue distribution, expressed by the venom gland.

The protein localises to the secreted. The catalysed reaction is an L-alpha-amino acid + O2 + H2O = a 2-oxocarboxylate + H2O2 + NH4(+). The enzyme catalyses L-leucine + O2 + H2O = 4-methyl-2-oxopentanoate + H2O2 + NH4(+). It carries out the reaction L-phenylalanine + O2 + H2O = 3-phenylpyruvate + H2O2 + NH4(+). It catalyses the reaction L-tryptophan + O2 + H2O = indole-3-pyruvate + H2O2 + NH4(+). The catalysed reaction is L-methionine + O2 + H2O = 4-methylsulfanyl-2-oxobutanoate + H2O2 + NH4(+). The enzyme catalyses L-isoleucine + O2 + H2O = (S)-3-methyl-2-oxopentanoate + H2O2 + NH4(+). It carries out the reaction L-arginine + O2 + H2O = 5-guanidino-2-oxopentanoate + H2O2 + NH4(+). It catalyses the reaction L-histidine + O2 + H2O = 3-(imidazol-5-yl)pyruvate + H2O2 + NH4(+). The catalysed reaction is L-asparagine + O2 + H2O = 2-oxosuccinamate + H2O2 + NH4(+). The enzyme catalyses L-valine + O2 + H2O = 3-methyl-2-oxobutanoate + H2O2 + NH4(+). It carries out the reaction L-glutamate + O2 + H2O = H2O2 + 2-oxoglutarate + NH4(+). Functionally, catalyzes an oxidative deamination of predominantly hydrophobic and aromatic L-amino acids, thus producing hydrogen peroxide that may contribute to the diverse toxic effects of this enzyme. Is highly active on L-Met, L-Leu, L-Phe, L-Ile, and L-Arg, moderately active on L-His, L-Trp, L-Asn, L-Glu, and L-Val, and weakly or not active on L-Gln, L-Lys, L-Asp, L-Ala, L-Tyr, L-Ser, L-Pro, L-Gly, L-Thr, and L-Cys. Exhibits diverse biological activities, such as hemorrhage, hemolysis, edema, apoptosis of vascular endothelial cells or tumor cell lines, antibacterial and antiparasitic activities. In addition, this protein has an ability to induce apoptosis in cultured HeLa and K562 cells, and inhibits ADP-induced platelet aggregation dose-dependently. Effects of snake L-amino oxidases on platelets are controversial, since they either induce aggregation or inhibit agonist-induced aggregation. These different effects are probably due to different experimental conditions. This chain is L-amino-acid oxidase, found in Vipera berus berus (Common viper).